The following is a 207-amino-acid chain: Small ribosomal subunit protein uS4 (207 aa).

The disordered stretch occupies residues 35-54 (RPKPPGPQLGRPRRLSDRGQ). Residues 97–163 (RRLDNVLFRL…AYFKTLAENI (67 aa)) enclose the S4 RNA-binding domain.

Belongs to the universal ribosomal protein uS4 family. Part of the 30S ribosomal subunit. Contacts protein S5. The interaction surface between S4 and S5 is involved in control of translational fidelity.

One of the primary rRNA binding proteins, it binds directly to 16S rRNA where it nucleates assembly of the body of the 30S subunit. Its function is as follows. With S5 and S12 plays an important role in translational accuracy. The protein is Small ribosomal subunit protein uS4 of Dehalococcoides mccartyi (strain CBDB1).